The following is a 281-amino-acid chain: 3'-5' exonuclease Snipper (281 aa).

The disordered stretch occupies residues 19–52 (DGARPDPNNDPEESFNEDEVTEANSVPAKSKKSR). Positions 27–39 (NDPEESFNEDEVT) are enriched in acidic residues. Residues 64-262 (YVIAVDFEAT…MCKMVRDGAL (199 aa)) enclose the Exonuclease domain. Positions 69 and 71 each coordinate Mg(2+). The active-site Proton acceptor is glutamate 71. Residues glutamate 71 and alanine 72 each coordinate AMP. Aspartate 183 lines the Mg(2+) pocket. Residue histidine 240 is the Proton acceptor of the active site. AMP is bound at residue histidine 240. Aspartate 245 serves as a coordination point for Mg(2+).

Belongs to the ERI2 family. Mg(2+) is required as a cofactor.

The protein resides in the cytoplasm. The protein localises to the nucleus. Its subcellular location is the nucleolus. Its function is as follows. A broad-specificity exonuclease, capable of degrading both structure-specific DNA and RNA targets without sequence specificity in vitro. Requires two to five unpaired nucleotides in the 3' region for efficient binding and nuclease activity. Binds with higher affinity to RNA and DNA stem-loop substrates compared to single-stranded substrate. Binds to the 3'-end of histone mRNAs and degrades them, suggesting that it might play a role in histone mRNA decay after replication. Can readily cleave the histone stem-loop RNA beyond the -12 (UUU) position in the loop to produce -14 and then -16 oligonucleotide fragments for both the stem-loop and the reverse stem-loop. Cleaves both the single-stranded 3' flank as well as the double-stranded stem portion of histone stem-loop RNA. Might affect histone mRNA 3' processing thereby regulating histone protein expression. Has an important role in development and tissue formation. Might have a role in 5.8S rRNA precursor processing. This is 3'-5' exonuclease Snipper from Drosophila melanogaster (Fruit fly).